The sequence spans 831 residues: Periplasmic nitrate reductase (831 aa).

A signal peptide (tat-type signal) is located at residues 1–31 (MKLSRRDFMKANAAVAAAAAAGLTIPTVAKA). Residues 40 to 96 (IKWDKAPCRFCGTGCGVLVGTQNGRIVASQGDPDSPVNRGLNCVKGYFLPKIMYGKD) enclose the 4Fe-4S Mo/W bis-MGD-type domain. Residues cysteine 47, cysteine 50, cysteine 54, and cysteine 82 each contribute to the [4Fe-4S] cluster site. Mo-bis(molybdopterin guanine dinucleotide) contacts are provided by residues lysine 84, glutamine 151, asparagine 176, cysteine 180, 213–220 (WGSNMAEM), 244–248 (STFEH), 263–265 (QTD), methionine 373, glutamine 377, asparagine 483, 509–510 (SD), lysine 532, aspartate 559, and 719–728 (TGRVLEHWHT). Phenylalanine 795 provides a ligand contact to substrate. Asparagine 803 and lysine 820 together coordinate Mo-bis(molybdopterin guanine dinucleotide).

The protein belongs to the prokaryotic molybdopterin-containing oxidoreductase family. NasA/NapA/NarB subfamily. As to quaternary structure, component of the periplasmic nitrate reductase NapAB complex composed of NapA and NapB. [4Fe-4S] cluster serves as cofactor. It depends on Mo-bis(molybdopterin guanine dinucleotide) as a cofactor. In terms of processing, predicted to be exported by the Tat system. The position of the signal peptide cleavage has not been experimentally proven.

It is found in the periplasm. The catalysed reaction is 2 Fe(II)-[cytochrome] + nitrate + 2 H(+) = 2 Fe(III)-[cytochrome] + nitrite + H2O. In terms of biological role, catalytic subunit of the periplasmic nitrate reductase complex NapAB. Receives electrons from NapB and catalyzes the reduction of nitrate to nitrite. This Yersinia enterocolitica serotype O:8 / biotype 1B (strain NCTC 13174 / 8081) protein is Periplasmic nitrate reductase.